Reading from the N-terminus, the 1165-residue chain is Autophagy-related protein 11 (1165 aa).

Coiled coils occupy residues 239 to 304 (NKLN…YKNM) and 670 to 853 (DNIR…KQKK).

It belongs to the ATG11 family. Homodimer and potential homooligomers.

It is found in the preautophagosomal structure membrane. Functionally, plays an essential role in both non-selective and selective autophagy such as mitophagy. Recruits mitochondria for their selective degradation via autophagy (mitophagy) during starvation, through its interaction with ATG32. Works as scaffold proteins that recruit ATG proteins to the pre-autophagosome (PAS), the site of vesicle/autophagosome formation. Required for ATG9 anterograde transport from the mitochondria to the PAS. In Candida albicans (strain SC5314 / ATCC MYA-2876) (Yeast), this protein is Autophagy-related protein 11.